A 173-amino-acid polypeptide reads, in one-letter code: dCTP deaminase, dUMP-forming (173 aa).

Residues 93-98 (RSSIGR), Asp-111, 119-121 (TLE), Gln-138, and Tyr-151 contribute to the dCTP site. Catalysis depends on Glu-121, which acts as the Proton donor/acceptor.

It belongs to the dCTP deaminase family. As to quaternary structure, homotrimer.

The catalysed reaction is dCTP + 2 H2O = dUMP + NH4(+) + diphosphate. It functions in the pathway pyrimidine metabolism; dUMP biosynthesis; dUMP from dCTP: step 1/1. Functionally, bifunctional enzyme that catalyzes both the deamination of dCTP to dUTP and the hydrolysis of dUTP to dUMP without releasing the toxic dUTP intermediate. This chain is dCTP deaminase, dUMP-forming, found in Cytophaga hutchinsonii (strain ATCC 33406 / DSM 1761 / CIP 103989 / NBRC 15051 / NCIMB 9469 / D465).